Here is an 84-residue protein sequence, read N- to C-terminus: Mu-conotoxin-like Cal 12.2a (84 aa).

An N-terminal signal peptide occupies residues 1–19 (MKLTCVLVVLLLVLPFGDL). Positions 20-42 (ITTSNTEDNKRGATPWQNSLKAR) are excised as a propeptide. 4 disulfides stabilise this stretch: Cys-45/Cys-57, Cys-52/Cys-65, Cys-59/Cys-70, and Cys-64/Cys-76. Pro-48 is subject to 4-hydroxyproline. 6'-bromotryptophan is present on Trp-72. Pro-77 is subject to 4-hydroxyproline. 6'-bromotryptophan is present on Trp-81.

This sequence belongs to the conotoxin O1 superfamily. Expressed by the venom duct.

It localises to the secreted. In terms of biological role, mu-conotoxins block voltage-gated sodium channels. This toxin reversibly blocks voltage-gated sodium channel in cephalopods, with no alteration in the voltage dependence of sodium conductance or on the kinetics of inactivation. This chain is Mu-conotoxin-like Cal 12.2a, found in Californiconus californicus (California cone).